The following is a 333-amino-acid chain: MVQKGVVFGVLLILFICSTLTSADSKPNPTKEEEPAKKPDEVSVKSGGPEVSEDQYRHRCCAWGPGRKYCKRWCANAEEAAAAIPEASEELAQEEAPVYSEDQWGRRCCGWGPGRRYCVRWCQNAEEAAAAIPEATEKAQEAPVYSEDQWGRRCCGWGPGRRYCVRWCQNAEEAAAAVAIPEASEKAQEGPVYSEDQWGRRCCGWGPGRRYCVRWCSNAADEVATPEDVEPGQYGRRCCNWGPGRRYCKRWCHNAAEEATLKAFEEEAAREQPVYSEDQWGRRCCGWGPGRRYCRRWCQSAEEAAAFQAGEVTASLMLIMFKACPCMGPVPSV.

A signal peptide spans 1-23; that stretch reads MVQKGVVFGVLLILFICSTLTSA. The segment at 23–52 is disordered; the sequence is ADSKPNPTKEEEPAKKPDEVSVKSGGPEVS. A propeptide spans 24 to 54 (acidic peptide 1); sequence DSKPNPTKEEEPAKKPDEVSVKSGGPEVSED. Positions 29 to 43 are enriched in basic and acidic residues; sequence PTKEEEPAKKPDEVS. Gln-55 is modified (pyrrolidone carboxylic acid). 2 disulfides stabilise this stretch: Cys-60/Cys-70 and Cys-61/Cys-74. The propeptide at 75–102 is acidic peptide 2; it reads ANAEEAAAAIPEASEELAQEEAPVYSED. The residue at position 103 (Gln-103) is a Pyrrolidone carboxylic acid. Cystine bridges form between Cys-108-Cys-118 and Cys-109-Cys-122. Residues 123-148 constitute a propeptide, acidic peptide 3; the sequence is QNAEEAAAAIPEATEKAQEAPVYSED. Residue Gln-149 is modified to Pyrrolidone carboxylic acid. Disulfide bonds link Cys-154–Cys-164 and Cys-155–Cys-168. A propeptide spans 169–196 (acidic peptide 4); that stretch reads QNAEEAAAAVAIPEASEKAQEGPVYSED. Gln-197 carries the post-translational modification Pyrrolidone carboxylic acid. Disulfide bonds link Cys-202–Cys-212 and Cys-203–Cys-216. Residues 217–232 constitute a propeptide, acidic peptide 5; the sequence is SNAADEVATPEDVEPG. Gln-233 is modified (pyrrolidone carboxylic acid). 2 disulfide bridges follow: Cys-238/Cys-248 and Cys-239/Cys-252. Residues 253 to 278 constitute a propeptide, acidic peptide 6; that stretch reads HNAAEEATLKAFEEEAAREQPVYSED. Pyrrolidone carboxylic acid is present on Gln-279. Intrachain disulfides connect Cys-284–Cys-294 and Cys-285–Cys-298. Positions 299–333 are cleaved as a propeptide — acidic peptide 7; sequence QSAEEAAAFQAGEVTASLMLIMFKACPCMGPVPSV.

Post-translationally, the N-terminal of all peptides are blocked. In terms of processing, the 4 cysteine residues of all peptides are involved in intrachain disulfide bonds.

Its subcellular location is the secreted. Plays a role in the defense of the germinating seed against microorganisms, by inhibiting the growth of a range of filamentous fungi and bacteria, especially Gram-positive bacteria. Not cytotoxic for cultured human cells and are the smallest known plant-derived antimicrobial peptides. Peptide IB-AMP4 has a higher antifungal activity than IB-AMP1. This Impatiens balsamina (Balsam) protein is Antimicrobial peptides (AMP).